Consider the following 84-residue polypeptide: MKRPERRTLVGLVTSDKMHKTVTVRITTKKLHALYKKYVSRSKKYQAHDEENTARAGDVVRIAESRPLSRRKRWRLVEIVERAK.

Belongs to the universal ribosomal protein uS17 family. As to quaternary structure, part of the 30S ribosomal subunit.

Functionally, one of the primary rRNA binding proteins, it binds specifically to the 5'-end of 16S ribosomal RNA. This is Small ribosomal subunit protein uS17 from Treponema pallidum (strain Nichols).